Consider the following 130-residue polypeptide: Protein ApaG (130 aa).

The ApaG domain maps to 3–127 (RAVTRGIEVS…FSLDIPEQRR (125 aa)).

The polypeptide is Protein ApaG (Brucella anthropi (strain ATCC 49188 / DSM 6882 / CCUG 24695 / JCM 21032 / LMG 3331 / NBRC 15819 / NCTC 12168 / Alc 37) (Ochrobactrum anthropi)).